A 492-amino-acid chain; its full sequence is GMP reductase (492 aa).

NADP(+)-binding positions include 30-31 (SR) and arginine 78. 2 CBS domains span residues 99–162 (LIED…LVET) and 164–223 (MTPV…RNAT). NADP(+) is bound by residues 260 to 262 (DIA) and 313 to 314 (VG). K(+) contacts are provided by glycine 314, glycine 316, and cysteine 319. Cysteine 319 serves as the catalytic Thioimidate intermediate. The Proton donor/acceptor role is filled by threonine 321. Residue arginine 322 participates in K(+) binding. GMP-binding positions include 352 to 354 (DGG), 375 to 376 (GN), and 401 to 403 (GMA). NADP(+) is bound by residues methionine 402 and 454–457 (SGIS). Residues 490-492 (SKL) carry the Microbody targeting signal motif.

Belongs to the IMPDH/GMPR family. GuaC type 1 subfamily. As to quaternary structure, homotetramer.

Its subcellular location is the glycosome. It catalyses the reaction IMP + NH4(+) + NADP(+) = GMP + NADPH + 2 H(+). With respect to regulation, activated by GTP and inhibited by XMP and the IMP analogs allopurinol nucleotide and thiopurinol nucleotide. In terms of biological role, catalyzes the irreversible NADPH-dependent deamination of GMP to IMP. It functions in the conversion of nucleobase, nucleoside and nucleotide derivatives of G to A nucleotides, and in maintaining the intracellular balance of A and G nucleotides. In Leishmania donovani, this protein is GMP reductase.